The sequence spans 165 residues: Transmembrane protein 128 (165 aa).

4 consecutive transmembrane segments (helical) span residues 49 to 69 (NIHS…VDFF), 81 to 101 (WFLF…YCIV), 119 to 139 (LIPI…VALW), and 144 to 164 (FFTP…TSLL).

It is found in the membrane. In Bos taurus (Bovine), this protein is Transmembrane protein 128 (TMEM128).